The sequence spans 459 residues: V-type ATP synthase beta chain (459 aa).

It belongs to the ATPase alpha/beta chains family.

Produces ATP from ADP in the presence of a proton gradient across the membrane. The V-type beta chain is a regulatory subunit. This chain is V-type ATP synthase beta chain, found in Clostridium botulinum (strain Alaska E43 / Type E3).